The sequence spans 241 residues: tRNA pseudouridine synthase A (241 aa).

Asp-52 serves as the catalytic Nucleophile. Tyr-111 serves as a coordination point for substrate.

The protein belongs to the tRNA pseudouridine synthase TruA family. As to quaternary structure, homodimer.

The catalysed reaction is uridine(38/39/40) in tRNA = pseudouridine(38/39/40) in tRNA. Functionally, formation of pseudouridine at positions 38, 39 and 40 in the anticodon stem and loop of transfer RNAs. The chain is tRNA pseudouridine synthase A from Ureaplasma urealyticum serovar 10 (strain ATCC 33699 / Western).